The chain runs to 419 residues: S-adenosylmethionine synthase (419 aa).

His-14 contributes to the ATP binding site. Asp-16 lines the Mg(2+) pocket. Residue Glu-42 participates in K(+) binding. The L-methionine site is built by Glu-55 and Gln-98. Residues 98–108 (QSADINQGVDR) form a flexible loop region. ATP contacts are provided by residues 164-166 (DAK), 242-243 (KF), Asp-251, 257-258 (RK), Ala-274, and Lys-278. L-methionine is bound at residue Asp-251. Lys-282 contributes to the L-methionine binding site.

It belongs to the AdoMet synthase family. Homotetramer; dimer of dimers. The cofactor is Mg(2+). Requires K(+) as cofactor.

Its subcellular location is the cytoplasm. The catalysed reaction is L-methionine + ATP + H2O = S-adenosyl-L-methionine + phosphate + diphosphate. Its pathway is amino-acid biosynthesis; S-adenosyl-L-methionine biosynthesis; S-adenosyl-L-methionine from L-methionine: step 1/1. In terms of biological role, catalyzes the formation of S-adenosylmethionine (AdoMet) from methionine and ATP. The overall synthetic reaction is composed of two sequential steps, AdoMet formation and the subsequent tripolyphosphate hydrolysis which occurs prior to release of AdoMet from the enzyme. The polypeptide is S-adenosylmethionine synthase (Cytophaga hutchinsonii (strain ATCC 33406 / DSM 1761 / CIP 103989 / NBRC 15051 / NCIMB 9469 / D465)).